A 368-amino-acid polypeptide reads, in one-letter code: 3-dehydroquinate synthase (368 aa).

Residues 76 to 81 (DGEQYK), 110 to 114 (GVIGD), 134 to 135 (TT), lysine 147, lysine 156, and 174 to 177 (CLKT) each bind NAD(+). 3 residues coordinate Zn(2+): glutamate 189, histidine 252, and histidine 269.

The protein belongs to the sugar phosphate cyclases superfamily. Dehydroquinate synthase family. The cofactor is NAD(+). Requires Co(2+) as cofactor. Zn(2+) serves as cofactor.

Its subcellular location is the cytoplasm. It carries out the reaction 7-phospho-2-dehydro-3-deoxy-D-arabino-heptonate = 3-dehydroquinate + phosphate. It participates in metabolic intermediate biosynthesis; chorismate biosynthesis; chorismate from D-erythrose 4-phosphate and phosphoenolpyruvate: step 2/7. Functionally, catalyzes the conversion of 3-deoxy-D-arabino-heptulosonate 7-phosphate (DAHP) to dehydroquinate (DHQ). The protein is 3-dehydroquinate synthase of Vibrio vulnificus (strain YJ016).